Consider the following 430-residue polypeptide: Serine--tRNA ligase (430 aa).

237–239 (TAE) contributes to the L-serine binding site. 268-270 (RSE) contributes to the ATP binding site. Residue E291 participates in L-serine binding. 355–358 (EISS) provides a ligand contact to ATP. Residue S391 participates in L-serine binding.

It belongs to the class-II aminoacyl-tRNA synthetase family. Type-1 seryl-tRNA synthetase subfamily. Homodimer. The tRNA molecule binds across the dimer.

It localises to the cytoplasm. The catalysed reaction is tRNA(Ser) + L-serine + ATP = L-seryl-tRNA(Ser) + AMP + diphosphate + H(+). It catalyses the reaction tRNA(Sec) + L-serine + ATP = L-seryl-tRNA(Sec) + AMP + diphosphate + H(+). The protein operates within aminoacyl-tRNA biosynthesis; selenocysteinyl-tRNA(Sec) biosynthesis; L-seryl-tRNA(Sec) from L-serine and tRNA(Sec): step 1/1. Functionally, catalyzes the attachment of serine to tRNA(Ser). Is also able to aminoacylate tRNA(Sec) with serine, to form the misacylated tRNA L-seryl-tRNA(Sec), which will be further converted into selenocysteinyl-tRNA(Sec). This is Serine--tRNA ligase from Citrobacter koseri (strain ATCC BAA-895 / CDC 4225-83 / SGSC4696).